The primary structure comprises 108 residues: MSQWKDICKIDDILPETGVCALLGDEQVAIFRPYHSDQVFAISNIDPFFESSVLSRGLIAEHQGELWVASPLKKQRFRLSDGLCMEDEQFSVKHYEARVKDGVVQLRG.

This sequence to B.subtilis NasE. Associates with NirB.

The protein resides in the cytoplasm. The catalysed reaction is NH4(+) + 3 NAD(+) + 2 H2O = nitrite + 3 NADH + 5 H(+). Its function is as follows. Required for activity of the reductase. The sequence is that of Nitrite reductase (NADH) small subunit (nirD) from Escherichia coli O157:H7.